Consider the following 573-residue polypeptide: Putative ATP-dependent RNA helicase R563 (573 aa).

In terms of domain architecture, Helicase ATP-binding spans 57–233; that stretch reads INPKTPYKGL…ALTMNLLVRN (177 aa). 70–77 serves as a coordination point for ATP; that stretch reads HRIGAGKT. The short motif at 179–182 is the DEAH box element; sequence DEVH. The Helicase C-terminal domain maps to 374 to 551; the sequence is KILRKIKRCN…AFEKALKEAA (178 aa).

The protein belongs to the DEAD box helicase family. DEAH subfamily.

Its subcellular location is the virion. It carries out the reaction ATP + H2O = ADP + phosphate + H(+). This Acanthamoeba polyphaga mimivirus (APMV) protein is Putative ATP-dependent RNA helicase R563.